A 217-amino-acid chain; its full sequence is D-glycero-beta-D-manno-heptose-1,7-bisphosphate 7-phosphatase (217 aa).

D36 (nucleophile) is an active-site residue. Positions 36 and 38 each coordinate Mg(2+). Substrate is bound by residues 36 to 38, 44 to 47, 78 to 81, and 135 to 136; these read DRD, DTDY, TNQS, and RK. D38 (proton donor) is an active-site residue. Positions 161 and 162 each coordinate Mg(2+). Residue K162 participates in substrate binding.

It belongs to the gmhB family. In terms of assembly, monomer. Requires Mg(2+) as cofactor.

The protein resides in the cytoplasm. The enzyme catalyses D-glycero-beta-D-manno-heptose 1,7-bisphosphate + H2O = D-glycero-beta-D-manno-heptose 1-phosphate + phosphate. Its pathway is nucleotide-sugar biosynthesis; ADP-L-glycero-beta-D-manno-heptose biosynthesis; ADP-L-glycero-beta-D-manno-heptose from D-glycero-beta-D-manno-heptose 7-phosphate: step 2/4. In terms of biological role, converts the D-glycero-beta-D-manno-heptose 1,7-bisphosphate (beta-HBP) intermediate into D-glycero-beta-D-manno-heptose 1-phosphate by removing the phosphate group at the C-7 position. This is D-glycero-beta-D-manno-heptose-1,7-bisphosphate 7-phosphatase (gmhB) from Mesorhizobium japonicum (strain LMG 29417 / CECT 9101 / MAFF 303099) (Mesorhizobium loti (strain MAFF 303099)).